A 124-amino-acid polypeptide reads, in one-letter code: Iron-sulfur cluster insertion protein ErpA (124 aa).

3 residues coordinate iron-sulfur cluster: cysteine 52, cysteine 116, and cysteine 118.

The protein belongs to the HesB/IscA family. Homodimer. Iron-sulfur cluster is required as a cofactor.

Functionally, required for insertion of 4Fe-4S clusters for at least IspG. The polypeptide is Iron-sulfur cluster insertion protein ErpA (Acidithiobacillus ferrooxidans (strain ATCC 23270 / DSM 14882 / CIP 104768 / NCIMB 8455) (Ferrobacillus ferrooxidans (strain ATCC 23270))).